The primary structure comprises 48 residues: DNA-directed RNA polymerase subunit Rpo12 (48 aa).

The Zn(2+) site is built by C9, C26, and C29.

This sequence belongs to the archaeal Rpo12/eukaryotic RPC10 RNA polymerase subunit family. In terms of assembly, part of the RNA polymerase complex. It depends on Zn(2+) as a cofactor.

Its subcellular location is the cytoplasm. It carries out the reaction RNA(n) + a ribonucleoside 5'-triphosphate = RNA(n+1) + diphosphate. DNA-dependent RNA polymerase (RNAP) catalyzes the transcription of DNA into RNA using the four ribonucleoside triphosphates as substrates. This chain is DNA-directed RNA polymerase subunit Rpo12, found in Saccharolobus islandicus (strain Y.N.15.51 / Yellowstone #2) (Sulfolobus islandicus).